Consider the following 397-residue polypeptide: S-adenosylmethionine synthase (397 aa).

Histidine 16 provides a ligand contact to ATP. Residue aspartate 18 coordinates Mg(2+). Glutamate 44 lines the K(+) pocket. 2 residues coordinate L-methionine: glutamate 57 and glutamine 100. The flexible loop stretch occupies residues 100-110 (QSPDIAQGVNE). ATP is bound by residues 175 to 177 (DAK), 242 to 243 (RF), aspartate 251, 257 to 258 (RK), alanine 274, and lysine 278. An L-methionine-binding site is contributed by aspartate 251. L-methionine is bound at residue lysine 282.

The protein belongs to the AdoMet synthase family. In terms of assembly, homotetramer; dimer of dimers. Mg(2+) is required as a cofactor. Requires K(+) as cofactor.

Its subcellular location is the cytoplasm. It carries out the reaction L-methionine + ATP + H2O = S-adenosyl-L-methionine + phosphate + diphosphate. Its pathway is amino-acid biosynthesis; S-adenosyl-L-methionine biosynthesis; S-adenosyl-L-methionine from L-methionine: step 1/1. Catalyzes the formation of S-adenosylmethionine (AdoMet) from methionine and ATP. The overall synthetic reaction is composed of two sequential steps, AdoMet formation and the subsequent tripolyphosphate hydrolysis which occurs prior to release of AdoMet from the enzyme. In Streptococcus thermophilus (strain ATCC BAA-250 / LMG 18311), this protein is S-adenosylmethionine synthase.